The primary structure comprises 369 residues: Developmentally-regulated G-protein 3 (369 aa).

An OBG-type G domain is found at 66-291 (SRVGLVGFPS…LLDKIWEYLD (226 aa)). Residues 72–79 (GFPSVGKS), 118–122 (DLPGI), and 249–252 (NKID) contribute to the GTP site. A TGS domain is found at 291–367 (DLTRIYTKPK…EDEDVVQIVK (77 aa)).

The protein belongs to the TRAFAC class OBG-HflX-like GTPase superfamily. OBG GTPase family.

Functionally, binds GDP and GTP, and has low GTPase activity in vitro. The polypeptide is Developmentally-regulated G-protein 3 (DRG3) (Arabidopsis thaliana (Mouse-ear cress)).